Consider the following 194-residue polypeptide: Transcriptional repressor NrdR (194 aa).

Residues 3-33 fold into a zinc finger; the sequence is CPFCGHADDRVLDTRVQKDGSIRRRRECLEC. Residues 48 to 138 form the ATP-cone domain; that stretch reads PFIIKKDGRR…VYRTFKDVQE (91 aa). Residues 168 to 179 show a composition bias toward basic and acidic residues; the sequence is ESEKSTNHETDS. The segment at 168–194 is disordered; the sequence is ESEKSTNHETDSKTPSPRTRPPGPLSN. The span at 185-194 shows a compositional bias: pro residues; that stretch reads RTRPPGPLSN.

It belongs to the NrdR family. Requires Zn(2+) as cofactor.

In terms of biological role, negatively regulates transcription of bacterial ribonucleotide reductase nrd genes and operons by binding to NrdR-boxes. The sequence is that of Transcriptional repressor NrdR from Bdellovibrio bacteriovorus (strain ATCC 15356 / DSM 50701 / NCIMB 9529 / HD100).